A 280-amino-acid polypeptide reads, in one-letter code: Phosphatidylglycerol--prolipoprotein diacylglyceryl transferase (280 aa).

4 helical membrane-spanning segments follow: residues Trp30–Ile50, Phe71–Tyr91, Ile106–Ile126, and Ala132–Phe152. Arg154 serves as a coordination point for a 1,2-diacyl-sn-glycero-3-phospho-(1'-sn-glycerol). A run of 3 helical transmembrane segments spans residues Gln188–Tyr208, Gly217–Phe237, and Trp251–Ala271.

This sequence belongs to the Lgt family.

The protein resides in the cell inner membrane. The catalysed reaction is L-cysteinyl-[prolipoprotein] + a 1,2-diacyl-sn-glycero-3-phospho-(1'-sn-glycerol) = an S-1,2-diacyl-sn-glyceryl-L-cysteinyl-[prolipoprotein] + sn-glycerol 1-phosphate + H(+). It participates in protein modification; lipoprotein biosynthesis (diacylglyceryl transfer). Catalyzes the transfer of the diacylglyceryl group from phosphatidylglycerol to the sulfhydryl group of the N-terminal cysteine of a prolipoprotein, the first step in the formation of mature lipoproteins. The sequence is that of Phosphatidylglycerol--prolipoprotein diacylglyceryl transferase from Rhizobium meliloti (strain 1021) (Ensifer meliloti).